Reading from the N-terminus, the 550-residue chain is Chaperonin GroEL (550 aa).

ATP contacts are provided by residues 29–32 (TAGP), K50, 86–90 (DGTTT), G418, and D499.

It belongs to the chaperonin (HSP60) family. As to quaternary structure, forms a cylinder of 14 subunits composed of two heptameric rings stacked back-to-back. Interacts with the co-chaperonin GroES.

The protein localises to the cytoplasm. It catalyses the reaction ATP + H2O + a folded polypeptide = ADP + phosphate + an unfolded polypeptide.. Its function is as follows. Together with its co-chaperonin GroES, plays an essential role in assisting protein folding. The GroEL-GroES system forms a nano-cage that allows encapsulation of the non-native substrate proteins and provides a physical environment optimized to promote and accelerate protein folding. The polypeptide is Chaperonin GroEL (Wolbachia sp. subsp. Brugia malayi (strain TRS)).